The primary structure comprises 499 residues: UDP-N-acetylmuramoyl-L-alanyl-D-glutamate--2,6-diaminopimelate ligase (499 aa).

Residues Leu30 and Ser32 each coordinate UDP-N-acetyl-alpha-D-muramoyl-L-alanyl-D-glutamate. ATP is bound at residue 122–128 (GTNGKTT). UDP-N-acetyl-alpha-D-muramoyl-L-alanyl-D-glutamate is bound by residues 164–165 (TT), Ser191, Gln197, and Arg199. Residue Lys231 is modified to N6-carboxylysine. Residues Arg397, 421-424 (DNPR), Gly472, and Glu476 each bind meso-2,6-diaminopimelate. The Meso-diaminopimelate recognition motif motif lies at 421–424 (DNPR).

This sequence belongs to the MurCDEF family. MurE subfamily. It depends on Mg(2+) as a cofactor. Post-translationally, carboxylation is probably crucial for Mg(2+) binding and, consequently, for the gamma-phosphate positioning of ATP.

Its subcellular location is the cytoplasm. It carries out the reaction UDP-N-acetyl-alpha-D-muramoyl-L-alanyl-D-glutamate + meso-2,6-diaminopimelate + ATP = UDP-N-acetyl-alpha-D-muramoyl-L-alanyl-gamma-D-glutamyl-meso-2,6-diaminopimelate + ADP + phosphate + H(+). It participates in cell wall biogenesis; peptidoglycan biosynthesis. Its function is as follows. Catalyzes the addition of meso-diaminopimelic acid to the nucleotide precursor UDP-N-acetylmuramoyl-L-alanyl-D-glutamate (UMAG) in the biosynthesis of bacterial cell-wall peptidoglycan. The sequence is that of UDP-N-acetylmuramoyl-L-alanyl-D-glutamate--2,6-diaminopimelate ligase from Blochmanniella floridana.